The following is a 354-amino-acid chain: Uroporphyrinogen decarboxylase (354 aa).

Substrate is bound by residues Arg-27–Arg-31, Asp-77, Tyr-154, Ser-209, and His-327.

Belongs to the uroporphyrinogen decarboxylase family. In terms of assembly, homodimer.

Its subcellular location is the cytoplasm. It carries out the reaction uroporphyrinogen III + 4 H(+) = coproporphyrinogen III + 4 CO2. Its pathway is porphyrin-containing compound metabolism; protoporphyrin-IX biosynthesis; coproporphyrinogen-III from 5-aminolevulinate: step 4/4. In terms of biological role, catalyzes the decarboxylation of four acetate groups of uroporphyrinogen-III to yield coproporphyrinogen-III. In Saccharophagus degradans (strain 2-40 / ATCC 43961 / DSM 17024), this protein is Uroporphyrinogen decarboxylase.